The following is a 316-amino-acid chain: ATP synthase gamma chain (316 aa).

It belongs to the ATPase gamma chain family. As to quaternary structure, F-type ATPases have 2 components, CF(1) - the catalytic core - and CF(0) - the membrane proton channel. CF(1) has five subunits: alpha(3), beta(3), gamma(1), delta(1), epsilon(1). CF(0) has three main subunits: a, b and c.

The protein resides in the cellular thylakoid membrane. Produces ATP from ADP in the presence of a proton gradient across the membrane. The gamma chain is believed to be important in regulating ATPase activity and the flow of protons through the CF(0) complex. The sequence is that of ATP synthase gamma chain from Prochlorococcus marinus (strain MIT 9312).